Here is a 64-residue protein sequence, read N- to C-terminus: Large ribosomal subunit protein bL35 (64 aa).

Disordered stretches follow at residues 1 to 20 (MPKA…TGTG) and 37 to 64 (PTKR…MLNG).

This sequence belongs to the bacterial ribosomal protein bL35 family.

The polypeptide is Large ribosomal subunit protein bL35 (Mycobacterium sp. (strain JLS)).